The following is a 156-amino-acid chain: ATP synthase subunit b (156 aa).

The helical transmembrane segment at L7–P27 threads the bilayer.

The protein belongs to the ATPase B chain family. F-type ATPases have 2 components, F(1) - the catalytic core - and F(0) - the membrane proton channel. F(1) has five subunits: alpha(3), beta(3), gamma(1), delta(1), epsilon(1). F(0) has three main subunits: a(1), b(2) and c(10-14). The alpha and beta chains form an alternating ring which encloses part of the gamma chain. F(1) is attached to F(0) by a central stalk formed by the gamma and epsilon chains, while a peripheral stalk is formed by the delta and b chains.

It is found in the cell inner membrane. F(1)F(0) ATP synthase produces ATP from ADP in the presence of a proton or sodium gradient. F-type ATPases consist of two structural domains, F(1) containing the extramembraneous catalytic core and F(0) containing the membrane proton channel, linked together by a central stalk and a peripheral stalk. During catalysis, ATP synthesis in the catalytic domain of F(1) is coupled via a rotary mechanism of the central stalk subunits to proton translocation. Functionally, component of the F(0) channel, it forms part of the peripheral stalk, linking F(1) to F(0). This is ATP synthase subunit b from Pseudoalteromonas translucida (strain TAC 125).